A 469-amino-acid polypeptide reads, in one-letter code: Glutamate--tRNA ligase (469 aa).

A 'HIGH' region motif is present at residues 9–19; that stretch reads PSPTGFLHVGG. Positions 98, 100, 125, and 127 each coordinate Zn(2+). Positions 236-240 match the 'KMSKS' region motif; that stretch reads KLSKR. K239 provides a ligand contact to ATP.

It belongs to the class-I aminoacyl-tRNA synthetase family. Glutamate--tRNA ligase type 1 subfamily. As to quaternary structure, monomer. The cofactor is Zn(2+).

The protein resides in the cytoplasm. It catalyses the reaction tRNA(Glu) + L-glutamate + ATP = L-glutamyl-tRNA(Glu) + AMP + diphosphate. Its function is as follows. Catalyzes the attachment of glutamate to tRNA(Glu) in a two-step reaction: glutamate is first activated by ATP to form Glu-AMP and then transferred to the acceptor end of tRNA(Glu). The chain is Glutamate--tRNA ligase from Shewanella sediminis (strain HAW-EB3).